The following is a 292-amino-acid chain: Diaminopimelate epimerase (292 aa).

Substrate is bound by residues N13, Q46, and N66. C75 serves as the catalytic Proton donor. Residues 76-77 (GN), N166, N199, and 217-218 (ER) each bind substrate. C226 functions as the Proton acceptor in the catalytic mechanism. Residue 227-228 (GT) participates in substrate binding.

The protein belongs to the diaminopimelate epimerase family. Homodimer.

The protein localises to the cytoplasm. It catalyses the reaction (2S,6S)-2,6-diaminopimelate = meso-2,6-diaminopimelate. Its pathway is amino-acid biosynthesis; L-lysine biosynthesis via DAP pathway; DL-2,6-diaminopimelate from LL-2,6-diaminopimelate: step 1/1. Its function is as follows. Catalyzes the stereoinversion of LL-2,6-diaminopimelate (L,L-DAP) to meso-diaminopimelate (meso-DAP), a precursor of L-lysine and an essential component of the bacterial peptidoglycan. The chain is Diaminopimelate epimerase from Ralstonia pickettii (strain 12J).